The chain runs to 720 residues: Ornithine decarboxylase (720 aa).

Lysine 354 bears the N6-(pyridoxal phosphate)lysine mark.

This sequence belongs to the Orn/Lys/Arg decarboxylase class-I family. Pyridoxal 5'-phosphate is required as a cofactor.

It carries out the reaction L-ornithine + H(+) = putrescine + CO2. The chain is Ornithine decarboxylase (speF) from Haemophilus influenzae (strain ATCC 51907 / DSM 11121 / KW20 / Rd).